Reading from the N-terminus, the 924-residue chain is Periplasmic nitrate reductase (924 aa).

The tat-type signal signal peptide spans 1 to 30 (MNRRDFIKNTAIASAASVAGLSVPSSMLGA). One can recognise a 4Fe-4S Mo/W bis-MGD-type domain in the interval 35–91 (WKWDKAVCRFCGTGCGIMIARKDGKIVATKGDPAAPVNRGLNCIKGYFNAKIMYGED). [4Fe-4S] cluster-binding residues include Cys42, Cys45, Cys49, and Cys77. Mo-bis(molybdopterin guanine dinucleotide)-binding positions include Lys79, Gln147, Asn172, Cys176, 209-216 (WGANMAEM), Met417, Gln421, Asn527, 552-553 (SD), Lys575, Asp602, and 814-823 (TGRVLEHWHS). Trp890 contributes to the substrate binding site. Residues Asn898 and Lys915 each contribute to the Mo-bis(molybdopterin guanine dinucleotide) site.

This sequence belongs to the prokaryotic molybdopterin-containing oxidoreductase family. NasA/NapA/NarB subfamily. Component of the periplasmic nitrate reductase NapAB complex composed of NapA and NapB. The cofactor is [4Fe-4S] cluster. It depends on Mo-bis(molybdopterin guanine dinucleotide) as a cofactor. Post-translationally, predicted to be exported by the Tat system. The position of the signal peptide cleavage has not been experimentally proven.

Its subcellular location is the periplasm. The enzyme catalyses 2 Fe(II)-[cytochrome] + nitrate + 2 H(+) = 2 Fe(III)-[cytochrome] + nitrite + H2O. In terms of biological role, catalytic subunit of the periplasmic nitrate reductase complex NapAB. Receives electrons from NapB and catalyzes the reduction of nitrate to nitrite. The chain is Periplasmic nitrate reductase from Campylobacter jejuni subsp. jejuni serotype O:6 (strain 81116 / NCTC 11828).